The chain runs to 493 residues: NADH-quinone oxidoreductase subunit N (493 aa).

The next 14 membrane-spanning stretches (helical) occupy residues 8–28, 34–54, 71–91, 102–122, 123–143, 157–177, 200–220, 232–252, 266–286, 294–314, 325–345, 370–390, 405–427, and 443–463; these read ALLPFIVLSAAAVAVMLAIAI, LVFWLTVGGLLAGLSTLPHAS, GLFFHALFLLAALVVALLCLA, EIFVLLLTSTLGALLLVSSAH, LAMFFLGLEVLTISLFPMIAY, YLMLSGLASSFLMFGMAMVYG, ALAGLFLILAAIGFKLSLVPF, PTPVTAFLATVSKASVFALLL, FLCVLGLLAVVSILAGNLLAL, LLAYSSIAHMGYLLTGFVAAG, IAFYLAAYTVTSLTAFGAISA, AAVLTLSLLSLAGIPLTVGFV, WPLVATVVIGSGIGIYYYLRVVL, and PAAGTALAAAALVILAAGLFP. The tract at residues 473–493 is disordered; it reads VPQPPPTADSPQRLTATGGLP.

The protein belongs to the complex I subunit 2 family. NDH-1 is composed of 14 different subunits. Subunits NuoA, H, J, K, L, M, N constitute the membrane sector of the complex.

It is found in the cell inner membrane. The enzyme catalyses a quinone + NADH + 5 H(+)(in) = a quinol + NAD(+) + 4 H(+)(out). Functionally, NDH-1 shuttles electrons from NADH, via FMN and iron-sulfur (Fe-S) centers, to quinones in the respiratory chain. The immediate electron acceptor for the enzyme in this species is believed to be ubiquinone. Couples the redox reaction to proton translocation (for every two electrons transferred, four hydrogen ions are translocated across the cytoplasmic membrane), and thus conserves the redox energy in a proton gradient. The protein is NADH-quinone oxidoreductase subunit N of Methylococcus capsulatus (strain ATCC 33009 / NCIMB 11132 / Bath).